Reading from the N-terminus, the 2255-residue chain is Non-reducing polyketide synthase nvfA (2255 aa).

The segment at Ile13 to Glu251 is N-terminal acylcarrier protein transacylase domain (SAT). Residues Val365 to Gln781 form the Ketosynthase family 3 (KS3) domain. Active-site for beta-ketoacyl synthase activity residues include Cys530, His665, and His704. The interval Leu887–Ala1187 is malonyl-CoA:ACP transacylase (MAT) domain. Ser974 acts as the For acyl/malonyl transferase activity in catalysis. The tract at residues Glu1229–Ser1357 is N-terminal hotdog fold. The 308-residue stretch at Glu1229–Thr1536 folds into the PKS/mFAS DH domain. The interval Gly1232 to Leu1535 is product template (PT) domain. His1262 (proton acceptor; for dehydratase activity) is an active-site residue. Residues Ser1385–Thr1536 form a C-terminal hotdog fold region. The active-site Proton donor; for dehydratase activity is the Asp1443. Residues Thr1581–Ala1655 form the Carrier domain. Ser1615 is subject to O-(pantetheine 4'-phosphoryl)serine. Positions His1809–Asn2042 are methyltransferase (CMeT) domain. The tract at residues Leu2109–Tyr2227 is thioesterase (TE) domain. Ser2194 acts as the For thioesterase activity in catalysis.

It catalyses the reaction 3 malonyl-CoA + acetyl-CoA + 2 S-adenosyl-L-methionine = 3,5-dimethylorsellinate + 2 S-adenosyl-L-homocysteine + 3 CO2 + 4 CoA. It participates in secondary metabolite biosynthesis; terpenoid biosynthesis. Non-reducing polyketide synthase; part of the gene cluster that mediates the biosynthesis of novofumigatonin, a heavily oxygenated meroterpenoid containing a unique orthoester moiety. The first step of the pathway is the synthesis of 3,5-dimethylorsellinic acid (DMOA) by the polyketide synthase nvfA via condensation of one acetyl-CoA starter unit with 3 malonyl-CoA units and 2 methylations. DMOA is then converted to farnesyl-DMOA by the farnesyltransferase nvfB. Epoxydation by FAD-dependent monooxygenase nvfK, followed by a protonation-initiated cyclization catalyzed by the terpene cyclase nvfL leads to the production of asnavolin H. The short chain dehydrogenase nvfC then as a 3-OH dehydrogenase of asnovolin H to yield chemesin D. There are two branches to synthesize asnovolin A from chemesin D. In one branch, chemesin D undergoes Baeyer-Villiger oxidation by nvfH, methylation by nvfJ, and enoyl reduction by the nvfM D enoylreductase that reduces the double bond between C-5'and C-6', to form respectively asnovolin I, asnovolin K, and asnovolin A. In the other branch, the methylation precedes the Baeyer-Villiger oxidation and the enoyl reduction to yield asnovolin A via the asnovolin J intermediate. Asnovolin A is further converted to fumigatonoid A by the Fe(II)/2-oxoglutarate-dependent dioxygenase nvfI that catalyzes an endoperoxidation reaction. The alpha/beta hydrolase nvfD then acts as an epimerase that converts fumigatonoid A to its C-5' epimer, which then undergoes spontaneous or nvfD-catalyzed lactonization. The following step utilizes the ketoreductase nvfG to produce fumigatonoid B. The dioxygenase nvfE further converts fumigatonoid B into fumigatonoid C. Finally the Fe(II)/2-oxoglutarate-dependent dioxygenase nvfF catalyzes two rounds of oxidation to transform fumigatonoid C into the end product, novofumigatonin A. In Aspergillus novofumigatus (strain IBT 16806), this protein is Non-reducing polyketide synthase nvfA.